The following is a 213-amino-acid chain: MTITKKLSRTEMAQRVAADIQEGAYVNLGIGAPTLVANYLGDKEVFLHSENGLLGMGPSPAPGEEDDDLINAGKQHVTLLTGGAFFHHADSFSMMRGGHLDIAVLGAFQVSVKGDLANWHTGAEGSIPAVGGAMDLATGARQVFVMMDHLTKTGESKLVPECTYPLTGIACVSRIYTDLAVLEVTPEGLKVVEICADIDFDELQKLSGVPLIK.

The active site involves E50.

This sequence belongs to the 3-oxoacid CoA-transferase subunit B family. As to quaternary structure, heterodimer.

The catalysed reaction is 3-oxoadipate + succinyl-CoA = 3-oxoadipyl-CoA + succinate. Its pathway is aromatic compound metabolism; beta-ketoadipate pathway; acetyl-CoA and succinyl-CoA from 3-oxoadipate: step 1/2. The sequence is that of 3-oxoadipate CoA-transferase subunit B (pcaJ) from Pseudomonas putida (strain ATCC 47054 / DSM 6125 / CFBP 8728 / NCIMB 11950 / KT2440).